Here is a 274-residue protein sequence, read N- to C-terminus: Putative hydro-lyase Veis_4744 (274 aa).

This sequence belongs to the D-glutamate cyclase family.

The polypeptide is Putative hydro-lyase Veis_4744 (Verminephrobacter eiseniae (strain EF01-2)).